A 207-amino-acid chain; its full sequence is ATP-dependent Clp protease proteolytic subunit 1 (207 aa).

Ser103 acts as the Nucleophile in catalysis. Residue His128 is part of the active site.

This sequence belongs to the peptidase S14 family. As to quaternary structure, fourteen ClpP subunits assemble into 2 heptameric rings which stack back to back to give a disk-like structure with a central cavity, resembling the structure of eukaryotic proteasomes.

Its subcellular location is the cytoplasm. The enzyme catalyses Hydrolysis of proteins to small peptides in the presence of ATP and magnesium. alpha-casein is the usual test substrate. In the absence of ATP, only oligopeptides shorter than five residues are hydrolyzed (such as succinyl-Leu-Tyr-|-NHMec, and Leu-Tyr-Leu-|-Tyr-Trp, in which cleavage of the -Tyr-|-Leu- and -Tyr-|-Trp bonds also occurs).. Its function is as follows. Cleaves peptides in various proteins in a process that requires ATP hydrolysis. Has a chymotrypsin-like activity. Plays a major role in the degradation of misfolded proteins. This chain is ATP-dependent Clp protease proteolytic subunit 1, found in Tropheryma whipplei (strain Twist) (Whipple's bacillus).